A 150-amino-acid chain; its full sequence is MAMEMAMMGLLGTVVGASAMGIGGIAKSIAEAYVPGVAAAKDRRQQMNVDLQARRYEAVRVWRSGLCSASNAYRQWEAGSRDTHAPNVVGDEWFEGLRPHLPTTGEAAKFRTAYEVRCDNPTLMVLSLEIGRIEKEWMVEASGRTPKHRG.

The N-terminal stretch at 1–21 (MAMEMAMMGLLGTVVGASAMG) is a signal peptide.

This is an uncharacterized protein from Mycobacterium tuberculosis (strain CDC 1551 / Oshkosh).